The chain runs to 256 residues: Methylesterase 9 (256 aa).

S78 (acyl-ester intermediate) is an active-site residue. Active-site charge relay system residues include D206 and H234.

The protein belongs to the AB hydrolase superfamily. Methylesterase family.

It carries out the reaction methyl (indol-3-yl)acetate + H2O = (indol-3-yl)acetate + methanol + H(+). The catalysed reaction is methyl (-)-jasmonate + H2O = jasmonate + methanol + H(+). It catalyses the reaction methyl salicylate + H2O = salicylate + methanol + H(+). It functions in the pathway plant hormone biosynthesis. Its pathway is lipid metabolism; oxylipin biosynthesis. Its activity is regulated as follows. Esterase activity is down-regulated by salicylic acid (SA). Functionally, methylesterase shown to have carboxylesterase activity, methyl indole-3-acetic acid (MeIAA) esterase activity, methyl salicylate (MeSA) esterase activity and methyl jasmonate (MeJA) esterase activity in vitro. Required to convert methyl salicylate (MeSA) to salicylic acid (SA) as part of the signal transduction pathways that activate systemic acquired resistance in systemic tissue. MeSA is believed to be an inactive form that needs to be demethylated to exert a biological effect. This chain is Methylesterase 9, found in Arabidopsis thaliana (Mouse-ear cress).